The primary structure comprises 207 residues: Porin MspD (207 aa).

The signal sequence occupies residues Met1 to Ala24.

This sequence belongs to the mycobacterial porin (TC 1.B.24) family. In terms of assembly, octamers. Probably forms a goblet with the wide end on the exterior of the outer membrane and a central channel. It is not known if mixed oligomers of MspD with other Msp subunits form in vivo.

It localises to the cell outer membrane. Its subcellular location is the secreted. The protein resides in the cell wall. Functionally, a backup porin induced when MspA, the major porin, is deleted. It probably forms a water-filled channel which favors the permeation of cations. There are about 2400 porins in wild-type, 800 in an mspA deletion and 150 in a double mspA-mspC deletion. This is Porin MspD (mspD) from Mycolicibacterium smegmatis (strain ATCC 700084 / mc(2)155) (Mycobacterium smegmatis).